The chain runs to 124 residues: Small ribosomal subunit protein uS12 (124 aa).

The tract at residues Met1 to Ala23 is disordered. Residue Asp89 is modified to 3-methylthioaspartic acid.

This sequence belongs to the universal ribosomal protein uS12 family. Part of the 30S ribosomal subunit. Contacts proteins S8 and S17. May interact with IF1 in the 30S initiation complex.

Its function is as follows. With S4 and S5 plays an important role in translational accuracy. Functionally, interacts with and stabilizes bases of the 16S rRNA that are involved in tRNA selection in the A site and with the mRNA backbone. Located at the interface of the 30S and 50S subunits, it traverses the body of the 30S subunit contacting proteins on the other side and probably holding the rRNA structure together. The combined cluster of proteins S8, S12 and S17 appears to hold together the shoulder and platform of the 30S subunit. This Pseudoalteromonas translucida (strain TAC 125) protein is Small ribosomal subunit protein uS12.